A 361-amino-acid polypeptide reads, in one-letter code: Phosphoserine aminotransferase (361 aa).

Arginine 42 contributes to the L-glutamate binding site. Pyridoxal 5'-phosphate is bound by residues 76–77 (AT), tryptophan 102, threonine 152, aspartate 172, and glutamine 195. Lysine 196 is modified (N6-(pyridoxal phosphate)lysine). Pyridoxal 5'-phosphate is bound at residue 237–238 (NT).

It belongs to the class-V pyridoxal-phosphate-dependent aminotransferase family. SerC subfamily. Homodimer. Pyridoxal 5'-phosphate serves as cofactor.

It is found in the cytoplasm. It catalyses the reaction O-phospho-L-serine + 2-oxoglutarate = 3-phosphooxypyruvate + L-glutamate. The enzyme catalyses 4-(phosphooxy)-L-threonine + 2-oxoglutarate = (R)-3-hydroxy-2-oxo-4-phosphooxybutanoate + L-glutamate. It participates in amino-acid biosynthesis; L-serine biosynthesis; L-serine from 3-phospho-D-glycerate: step 2/3. It functions in the pathway cofactor biosynthesis; pyridoxine 5'-phosphate biosynthesis; pyridoxine 5'-phosphate from D-erythrose 4-phosphate: step 3/5. Functionally, catalyzes the reversible conversion of 3-phosphohydroxypyruvate to phosphoserine and of 3-hydroxy-2-oxo-4-phosphonooxybutanoate to phosphohydroxythreonine. The protein is Phosphoserine aminotransferase of Xanthomonas campestris pv. campestris (strain 8004).